Reading from the N-terminus, the 226-residue chain is NAD(P)H-quinone oxidoreductase subunit K, chloroplastic (226 aa).

Positions 43, 44, 108, and 139 each coordinate [4Fe-4S] cluster.

The protein belongs to the complex I 20 kDa subunit family. In terms of assembly, NDH is composed of at least 16 different subunits, 5 of which are encoded in the nucleus. It depends on [4Fe-4S] cluster as a cofactor.

It localises to the plastid. The protein localises to the chloroplast thylakoid membrane. The catalysed reaction is a plastoquinone + NADH + (n+1) H(+)(in) = a plastoquinol + NAD(+) + n H(+)(out). It catalyses the reaction a plastoquinone + NADPH + (n+1) H(+)(in) = a plastoquinol + NADP(+) + n H(+)(out). Its function is as follows. NDH shuttles electrons from NAD(P)H:plastoquinone, via FMN and iron-sulfur (Fe-S) centers, to quinones in the photosynthetic chain and possibly in a chloroplast respiratory chain. The immediate electron acceptor for the enzyme in this species is believed to be plastoquinone. Couples the redox reaction to proton translocation, and thus conserves the redox energy in a proton gradient. In Lupinus luteus (European yellow lupine), this protein is NAD(P)H-quinone oxidoreductase subunit K, chloroplastic.